Here is a 316-residue protein sequence, read N- to C-terminus: Cuticle collagen 7 (316 aa).

The N-terminal stretch at 1 to 34 (MSSATFLSVMAGLSGIVVFGALISVFHIYSDINS) is a signal peptide. Disordered regions lie at residues 78–269 (KQSQ…DAAY) and 281–316 (HRNV…HVQA). Positions 79–90 (QSQCNCGQQASN) are enriched in polar residues. Triple-helical region regions lie at residues 94-126 (GPPG…AGPS), 139-198 (GLPG…PGKS), and 204-263 (GLPG…DGTP). Composition is skewed to low complexity over residues 110-125 (QPGQ…VAGP), 137-147 (PQGLPGPAGVP), and 177-198 (AGSA…PGKS). Residues 209–221 (SGAPGPQGPPGAP) show a composition bias toward pro residues. Low complexity predominate over residues 241-260 (PNGQPGHPGQDGQPGAPGND).

Belongs to the cuticular collagen family. In terms of assembly, collagen polypeptide chains are complexed within the cuticle by disulfide bonds and other types of covalent cross-links.

Its function is as follows. Nematode cuticles are composed largely of collagen-like proteins. The cuticle functions both as an exoskeleton and as a barrier to protect the worm from its environment. The polypeptide is Cuticle collagen 7 (col-7) (Caenorhabditis elegans).